Consider the following 146-residue polypeptide: Ribosome-binding factor A (146 aa).

Residues 121-146 (KQQQFGSADDVTENDIDEADDTEGKA) are disordered. Acidic residues predominate over residues 130 to 146 (DVTENDIDEADDTEGKA).

The protein belongs to the RbfA family. Monomer. Binds 30S ribosomal subunits, but not 50S ribosomal subunits or 70S ribosomes.

The protein localises to the cytoplasm. In terms of biological role, one of several proteins that assist in the late maturation steps of the functional core of the 30S ribosomal subunit. Associates with free 30S ribosomal subunits (but not with 30S subunits that are part of 70S ribosomes or polysomes). Required for efficient processing of 16S rRNA. May interact with the 5'-terminal helix region of 16S rRNA. This Shewanella sp. (strain MR-4) protein is Ribosome-binding factor A.